Reading from the N-terminus, the 375-residue chain is Anhydro-N-acetylmuramic acid kinase 1 (375 aa).

Gly-20 to Asp-27 provides a ligand contact to ATP. A disordered region spans residues Ala-351–Ser-375.

It belongs to the anhydro-N-acetylmuramic acid kinase family.

The enzyme catalyses 1,6-anhydro-N-acetyl-beta-muramate + ATP + H2O = N-acetyl-D-muramate 6-phosphate + ADP + H(+). It participates in amino-sugar metabolism; 1,6-anhydro-N-acetylmuramate degradation. It functions in the pathway cell wall biogenesis; peptidoglycan recycling. Its function is as follows. Catalyzes the specific phosphorylation of 1,6-anhydro-N-acetylmuramic acid (anhMurNAc) with the simultaneous cleavage of the 1,6-anhydro ring, generating MurNAc-6-P. Is required for the utilization of anhMurNAc either imported from the medium or derived from its own cell wall murein, and thus plays a role in cell wall recycling. The protein is Anhydro-N-acetylmuramic acid kinase 1 of Jannaschia sp. (strain CCS1).